The primary structure comprises 170 residues: MTLLDSSIFRFRLSSLHVSSRSLGVYFAGIMFASAVWVFVDAALYSAFDYARNLHITFIDWIPFLCSILGIVIVNSIDKSRLSGDSFAYTDESLARKARFILFIGFALLAGGLGGSFTVFILKYVVAGYEGKSLLMGSANIISNILFMISATALWITGNMNDDYHYNLQL.

Helical transmembrane passes span 23–43 (LGVY…VDAA), 54–74 (LHIT…IVIV), 101–121 (ILFI…TVFI), and 136–156 (MGSA…ALWI).

This sequence belongs to the UPF0220 family.

The protein resides in the membrane. This Schizosaccharomyces pombe (strain 972 / ATCC 24843) (Fission yeast) protein is UPF0220 protein C8D2.02c.